A 146-amino-acid polypeptide reads, in one-letter code: Transcriptional regulator MraZ (146 aa).

SpoVT-AbrB domains follow at residues 4 to 46 (TVFR…SQTE) and 75 to 118 (TVKV…PEQR).

Belongs to the MraZ family. In terms of assembly, forms oligomers.

Its subcellular location is the cytoplasm. The protein resides in the nucleoid. This Mesomycoplasma hyopneumoniae (strain 232) (Mycoplasma hyopneumoniae) protein is Transcriptional regulator MraZ.